A 360-amino-acid chain; its full sequence is S-adenosylmethionine:tRNA ribosyltransferase-isomerase (360 aa).

This sequence belongs to the QueA family. Monomer.

It is found in the cytoplasm. The catalysed reaction is 7-aminomethyl-7-carbaguanosine(34) in tRNA + S-adenosyl-L-methionine = epoxyqueuosine(34) in tRNA + adenine + L-methionine + 2 H(+). Its pathway is tRNA modification; tRNA-queuosine biosynthesis. Its function is as follows. Transfers and isomerizes the ribose moiety from AdoMet to the 7-aminomethyl group of 7-deazaguanine (preQ1-tRNA) to give epoxyqueuosine (oQ-tRNA). This is S-adenosylmethionine:tRNA ribosyltransferase-isomerase from Rhizobium rhizogenes (strain K84 / ATCC BAA-868) (Agrobacterium radiobacter).